The primary structure comprises 168 residues: Protein-export protein SecB (168 aa).

This sequence belongs to the SecB family. As to quaternary structure, homotetramer, a dimer of dimers. One homotetramer interacts with 1 SecA dimer.

Its subcellular location is the cytoplasm. Functionally, one of the proteins required for the normal export of preproteins out of the cell cytoplasm. It is a molecular chaperone that binds to a subset of precursor proteins, maintaining them in a translocation-competent state. It also specifically binds to its receptor SecA. This Saccharophagus degradans (strain 2-40 / ATCC 43961 / DSM 17024) protein is Protein-export protein SecB.